The following is a 462-amino-acid chain: MAYKLSLSAVEPLLIFPAAPFSTKKEKSTFQNNLISSDVFSSALKPLSPLKSLVADFSTHSNPSKDNQLISPPKINHREFLNEEKESDTQTRYLKQLINICNSPSKNHETSLSPSKSTIDNNERKLDNEIDNYKHDVKYSPYKGQGKTSNPSQGTTKCPGIFEEDNFFSVSPKRRKNLFEKYGKTDLGKPARVPSPKKSLSSTIKSPPSRVKLPTSILSKSPPLKVPNKNRSSTFSPLRTPTSSSKTFVIVDHSTPSPPSIRTKLEAFAPNSTFATQKRLRRLATLESSPALRSTLKSLQSKSSPVKLLKLKEEKAKIKNQLFKSEEEKDPVGKQKLPLESSLSPLDHSSAEKEMQKAPAKNKRRRTGSLETGLYPKESPTPSKKRSKRVLWSLKHIVSPGNREKHSLNSTPESIMKKDTKWPQNLAKNNINSEPNTPTKSNIDTGKAHSARAHKTRKNIQS.

The segment covering 104–120 has biased composition (polar residues); the sequence is PSKNHETSLSPSKSTID. Disordered stretches follow at residues 104–161, 180–240, and 320–462; these read PSKN…CPGI, EKYG…PLRT, and NQLF…NIQS. Residues 121 to 138 show a composition bias toward basic and acidic residues; it reads NNERKLDNEIDNYKHDVK. The segment covering 146–156 has biased composition (polar residues); that stretch reads GKTSNPSQGTT. Over residues 180–189 the composition is skewed to basic and acidic residues; that stretch reads EKYGKTDLGK. The span at 229–240 shows a compositional bias: polar residues; that stretch reads KNRSSTFSPLRT. Residues 324–333 are compositionally biased toward basic and acidic residues; sequence KSEEEKDPVG. The span at 422–444 shows a compositional bias: polar residues; that stretch reads WPQNLAKNNINSEPNTPTKSNID. The span at 449–462 shows a compositional bias: basic residues; that stretch reads HSARAHKTRKNIQS.

As to quaternary structure, interacts with dlc1. The dlc1-nsk1 complex seems to oligomerize in chain-like structures. Also binds directly to spindle microtubules. In terms of processing, phosphorylated by cdk1 at prometaphase arrest. Phosphorylation prevents nsk1 kinetochore and spindle targeting. Dephosphorylated by clp1 at anaphase onset controls its relocalization.

The protein resides in the nucleus. Its subcellular location is the nucleolus. It is found in the cytoplasm. The protein localises to the cytoskeleton. It localises to the spindle. The protein resides in the chromosome. Its subcellular location is the centromere. It is found in the kinetochore. Functionally, ensures chromosome alignment and accurate chromosome segregation during mitosis. Promotes proper kinetochore-microtubule (k-MT) interactions during anaphase B. The phosphorylation status of nsk1 affects the proper k-MT coupling, ensuring that it interacts stably only at the correct time during mitosis. The polypeptide is Kinetochore protein nsk1 (nsk1) (Schizosaccharomyces pombe (strain 972 / ATCC 24843) (Fission yeast)).